A 149-amino-acid polypeptide reads, in one-letter code: Calmodulin (149 aa).

N-acetylalanine is present on Ala-2. 4 consecutive EF-hand domains span residues Glu-8–Asn-43, Pro-44–Asp-79, Asp-81–Lys-116, and Leu-117–Lys-149. The Ca(2+) site is built by Asp-21, Asp-23, Asp-25, Cys-27, Glu-32, Asp-57, Asp-59, Asn-61, Thr-63, Glu-68, Asp-94, Asp-96, Asn-98, and Glu-105. At Lys-116 the chain carries N6,N6,N6-trimethyllysine. Residues Asp-130, Asp-132, Asp-134, Gln-136, and Glu-141 each contribute to the Ca(2+) site.

The protein belongs to the calmodulin family.

In terms of biological role, calmodulin mediates the control of a large number of enzymes, ion channels and other proteins by Ca(2+). Among the enzymes to be stimulated by the calmodulin-Ca(2+) complex are a number of protein kinases and phosphatases. This Zea mays (Maize) protein is Calmodulin (CALM1).